A 607-amino-acid polypeptide reads, in one-letter code: Elongation factor 4 (607 aa).

One can recognise a tr-type G domain in the interval 6-188; that stretch reads SRIRNFSIIA…AIVARIPPPR (183 aa). GTP-binding positions include 18–23 and 135–138; these read DHGKST and NKID.

Belongs to the TRAFAC class translation factor GTPase superfamily. Classic translation factor GTPase family. LepA subfamily.

It localises to the cell inner membrane. The catalysed reaction is GTP + H2O = GDP + phosphate + H(+). Required for accurate and efficient protein synthesis under certain stress conditions. May act as a fidelity factor of the translation reaction, by catalyzing a one-codon backward translocation of tRNAs on improperly translocated ribosomes. Back-translocation proceeds from a post-translocation (POST) complex to a pre-translocation (PRE) complex, thus giving elongation factor G a second chance to translocate the tRNAs correctly. Binds to ribosomes in a GTP-dependent manner. The protein is Elongation factor 4 of Sphingopyxis alaskensis (strain DSM 13593 / LMG 18877 / RB2256) (Sphingomonas alaskensis).